The chain runs to 651 residues: Probable potassium transport system protein Kup (651 aa).

12 helical membrane-spanning segments follow: residues 41–61, 82–102, 130–150, 163–183, 194–214, 235–255, 276–296, 309–329, 366–386, 395–415, 426–446, and 450–470; these read LVLG…IYAF, VVSL…VLFV, LILG…VITP, IVAP…LVTL, VAIV…ASGL, FLTV…LAMT, WLWI…AFIL, MIPS…TVIA, IYIP…VLGF, AYGI…YIVM, ALPI…ANII, and EGGW…WTWV.

The protein belongs to the HAK/KUP transporter (TC 2.A.72) family.

It is found in the cell inner membrane. The enzyme catalyses K(+)(in) + H(+)(in) = K(+)(out) + H(+)(out). Transport of potassium into the cell. Likely operates as a K(+):H(+) symporter. The protein is Probable potassium transport system protein Kup of Brucella suis (strain ATCC 23445 / NCTC 10510).